A 57-amino-acid polypeptide reads, in one-letter code: Small ribosomal subunit protein eS27 (57 aa).

Cys-10, Cys-13, Cys-29, and Cys-32 together coordinate Zn(2+). The C4-type zinc-finger motif lies at 10–32 (CPDCENEQSLFEKAASEVSCAVC).

It belongs to the eukaryotic ribosomal protein eS27 family. Part of the 30S ribosomal subunit. Requires Zn(2+) as cofactor.

In Haloarcula marismortui (strain ATCC 43049 / DSM 3752 / JCM 8966 / VKM B-1809) (Halobacterium marismortui), this protein is Small ribosomal subunit protein eS27.